The sequence spans 319 residues: Methionyl-tRNA formyltransferase (319 aa).

114-117 (SLLP) is a (6S)-5,6,7,8-tetrahydrofolate binding site.

It belongs to the Fmt family.

It catalyses the reaction L-methionyl-tRNA(fMet) + (6R)-10-formyltetrahydrofolate = N-formyl-L-methionyl-tRNA(fMet) + (6S)-5,6,7,8-tetrahydrofolate + H(+). In terms of biological role, attaches a formyl group to the free amino group of methionyl-tRNA(fMet). The formyl group appears to play a dual role in the initiator identity of N-formylmethionyl-tRNA by promoting its recognition by IF2 and preventing the misappropriation of this tRNA by the elongation apparatus. This is Methionyl-tRNA formyltransferase from Acinetobacter baylyi (strain ATCC 33305 / BD413 / ADP1).